A 343-amino-acid polypeptide reads, in one-letter code: UDP-3-O-acylglucosamine N-acyltransferase (343 aa).

The active-site Proton acceptor is the histidine 239.

The protein belongs to the transferase hexapeptide repeat family. LpxD subfamily. Homotrimer.

The catalysed reaction is a UDP-3-O-[(3R)-3-hydroxyacyl]-alpha-D-glucosamine + a (3R)-hydroxyacyl-[ACP] = a UDP-2-N,3-O-bis[(3R)-3-hydroxyacyl]-alpha-D-glucosamine + holo-[ACP] + H(+). The protein operates within bacterial outer membrane biogenesis; LPS lipid A biosynthesis. Catalyzes the N-acylation of UDP-3-O-acylglucosamine using 3-hydroxyacyl-ACP as the acyl donor. Is involved in the biosynthesis of lipid A, a phosphorylated glycolipid that anchors the lipopolysaccharide to the outer membrane of the cell. The chain is UDP-3-O-acylglucosamine N-acyltransferase from Vibrio parahaemolyticus serotype O3:K6 (strain RIMD 2210633).